We begin with the raw amino-acid sequence, 274 residues long: Large ribosomal subunit protein uL2c (274 aa).

The disordered stretch occupies residues 230 to 252; it reads HPHGGGEGRSPIGRSKPLTPWGK.

Belongs to the universal ribosomal protein uL2 family. In terms of assembly, part of the 50S ribosomal subunit.

The protein resides in the plastid. The chain is Large ribosomal subunit protein uL2c (rpl2) from Euglena longa (Euglenophycean alga).